Consider the following 814-residue polypeptide: Lon protease (814 aa).

Positions 1–20 (MANEAHNIEHTDPEFRDDSA) are disordered. The Lon N-terminal domain occupies 25-219 (LPLLPVRDTV…KINQHLAKEL (195 aa)). 372–379 (GPPGVGKT) contributes to the ATP binding site. The Lon proteolytic domain maps to 610 to 792 (TKRAGVVVGL…DEVLEIALPS (183 aa)). Residues serine 697 and lysine 740 contribute to the active site.

This sequence belongs to the peptidase S16 family. As to quaternary structure, homohexamer. Organized in a ring with a central cavity.

It localises to the cytoplasm. It catalyses the reaction Hydrolysis of proteins in presence of ATP.. ATP-dependent serine protease that mediates the selective degradation of mutant and abnormal proteins as well as certain short-lived regulatory proteins. Required for cellular homeostasis and for survival from DNA damage and developmental changes induced by stress. Degrades polypeptides processively to yield small peptide fragments that are 5 to 10 amino acids long. Binds to DNA in a double-stranded, site-specific manner. This chain is Lon protease, found in Koribacter versatilis (strain Ellin345).